We begin with the raw amino-acid sequence, 109 residues long: Flagellar hook-basal body complex protein FliE (109 aa).

The protein belongs to the FliE family.

It localises to the bacterial flagellum basal body. The sequence is that of Flagellar hook-basal body complex protein FliE from Stutzerimonas stutzeri (strain A1501) (Pseudomonas stutzeri).